The following is a 76-amino-acid chain: Small ribosomal subunit protein bS18 (76 aa).

The protein belongs to the bacterial ribosomal protein bS18 family. Part of the 30S ribosomal subunit. Forms a tight heterodimer with protein bS6.

Binds as a heterodimer with protein bS6 to the central domain of the 16S rRNA, where it helps stabilize the platform of the 30S subunit. This is Small ribosomal subunit protein bS18 from Tolumonas auensis (strain DSM 9187 / NBRC 110442 / TA 4).